A 589-amino-acid polypeptide reads, in one-letter code: Aspartate--tRNA ligase (589 aa).

Glu-174 is a binding site for L-aspartate. Residues 198-201 (QLFK) are aspartate. L-aspartate is bound at residue Arg-220. Residues 220-222 (RDE) and Gln-229 each bind ATP. Position 448 (His-448) interacts with L-aspartate. ATP is bound at residue Glu-483. Arg-490 serves as a coordination point for L-aspartate. Residue 535–538 (GIDR) participates in ATP binding.

This sequence belongs to the class-II aminoacyl-tRNA synthetase family. Type 1 subfamily. Homodimer.

The protein resides in the cytoplasm. It carries out the reaction tRNA(Asp) + L-aspartate + ATP = L-aspartyl-tRNA(Asp) + AMP + diphosphate. In terms of biological role, catalyzes the attachment of L-aspartate to tRNA(Asp) in a two-step reaction: L-aspartate is first activated by ATP to form Asp-AMP and then transferred to the acceptor end of tRNA(Asp). The sequence is that of Aspartate--tRNA ligase from Xylella fastidiosa (strain M12).